The following is a 932-amino-acid chain: DNA mismatch repair protein MutS (932 aa).

615-622 (GPNMAGKS) lines the ATP pocket.

This sequence belongs to the DNA mismatch repair MutS family.

Functionally, this protein is involved in the repair of mismatches in DNA. It is possible that it carries out the mismatch recognition step. This protein has a weak ATPase activity. The sequence is that of DNA mismatch repair protein MutS from Clostridium botulinum (strain Loch Maree / Type A3).